Here is a 918-residue protein sequence, read N- to C-terminus: Pre-pro-metalloprotease PrtV (918 aa).

A signal peptide spans 1 to 23; that stretch reads MKTIKKTLLAAAIASFFSSGLYA. The propeptide occupies 24–105; that stretch reads QTPIDLGVVN…QKGPHKARVF (82 aa). Zn(2+) is bound at residue histidine 330. The active site involves glutamate 331. Histidine 334 contributes to the Zn(2+) binding site. Positions 757, 782, 821, and 825 each coordinate Ca(2+). PKD domains follow at residues 758-835 and 855-918; these read APVA…TIKV and VTMW…KVKL. The propeptide occupies 835 to 918; it reads VDTPNALPQA…VTTITIKVKL (84 aa).

It belongs to the peptidase M6 family. Requires Zn(2+) as cofactor. Post-translationally, prtV is expressed as an inactive, multidomain, 102 kDa pre-pro-metalloprotease. To form a catalytically active protease, PrtV is first secreted, and then it undergoes N- and C-terminal cleavages during envelope translocation to yield a 81 kDa pro-metalloprotease. Outside the cell, the 81 kDa pro-metalloprotease undergoes an auto-cleavage. The two major products of autoproteolysis (37 kDa and 18 kDa) together form the so called 55 kDa active complex.

The protein localises to the secreted. Calcium plays an important structural role, providing stability to this protein in the cytoplasm. Outside the cell, the decrease of the calcium concentration triggers the autoproteolysis. PrtV activity is increased by 25 mM of Sr(2+) or Mg(2+) and to some extent by Ba(2+); however, Ba(2+) inhibits PrtV at higher concentrations. Completely inhibited by EDTA and 1,10-phenanthroline. Functionally, metalloprotease that exhibits a cytotoxic effect leading to cell death. In host tissues, it could play a role in pathogenesis by modulating the stability of the extracellular matrix components such as fibronectin and fibrinogen. Also able to cleave plasminogen. This Vibrio cholerae serotype O1 (strain ATCC 39315 / El Tor Inaba N16961) protein is Pre-pro-metalloprotease PrtV.